The primary structure comprises 693 residues: DNA ligase (693 aa).

NAD(+) contacts are provided by residues 40 to 44, 89 to 90, and Glu121; these read DSEYD and SL. Residue Lys123 is the N6-AMP-lysine intermediate of the active site. 4 residues coordinate NAD(+): Arg144, Glu179, Lys295, and Lys319. Residues Cys413, Cys416, Cys431, and Cys437 each contribute to the Zn(2+) site. The 84-residue stretch at 610 to 693 folds into the BRCT domain; the sequence is REQNILTGKI…AFIKCLEKEV (84 aa).

It belongs to the NAD-dependent DNA ligase family. LigA subfamily. Requires Mg(2+) as cofactor. It depends on Mn(2+) as a cofactor.

It carries out the reaction NAD(+) + (deoxyribonucleotide)n-3'-hydroxyl + 5'-phospho-(deoxyribonucleotide)m = (deoxyribonucleotide)n+m + AMP + beta-nicotinamide D-nucleotide.. In terms of biological role, DNA ligase that catalyzes the formation of phosphodiester linkages between 5'-phosphoryl and 3'-hydroxyl groups in double-stranded DNA using NAD as a coenzyme and as the energy source for the reaction. It is essential for DNA replication and repair of damaged DNA. The chain is DNA ligase from Rickettsia typhi (strain ATCC VR-144 / Wilmington).